Consider the following 434-residue polypeptide: Isocitrate lyase (434 aa).

91 to 93 provides a ligand contact to substrate; sequence SGW. Asp157 serves as a coordination point for Mg(2+). The active-site Proton acceptor is Cys195. Substrate is bound by residues 196 to 197, Arg232, 317 to 321, and Thr351; these read GH and NCSPS.

Belongs to the isocitrate lyase/PEP mutase superfamily. Isocitrate lyase family. Homotetramer. Mg(2+) serves as cofactor.

It carries out the reaction D-threo-isocitrate = glyoxylate + succinate. Its pathway is carbohydrate metabolism; glyoxylate cycle; (S)-malate from isocitrate: step 1/2. Functionally, involved in the metabolic adaptation in response to environmental changes. Catalyzes the reversible formation of succinate and glyoxylate from isocitrate, a key step of the glyoxylate cycle, which operates as an anaplerotic route for replenishing the tricarboxylic acid cycle during growth on fatty acid substrates. This chain is Isocitrate lyase (aceA), found in Escherichia coli O6:H1 (strain CFT073 / ATCC 700928 / UPEC).